The primary structure comprises 129 residues: Profilin-4 (129 aa).

It belongs to the profilin family.

The protein localises to the cytoplasm. Involved in male fertility. Required for manchette development and acrosome biogenesis during spermiogenesis. Binds in vitro to phospholipids, including phosphatidylinositol 3-phosphate (PtdIns(3)P), phosphatidylinositol 4,5-bisphosphate (PtdIns(4,5)P2), phosphatidylinositol 4-phosphate (PtdIns(4)P) and phosphatidic acid (PA). Contrary to other profilin family members, does not bind to actin in vitro. This Bos taurus (Bovine) protein is Profilin-4 (PFN4).